We begin with the raw amino-acid sequence, 120 residues long: Large ribosomal subunit protein uL29A (120 aa).

Residues serine 13 and serine 50 each carry the phosphoserine modification.

This sequence belongs to the universal ribosomal protein uL29 family. Component of the large ribosomal subunit (LSU). Mature yeast ribosomes consist of a small (40S) and a large (60S) subunit. The 40S small subunit contains 1 molecule of ribosomal RNA (18S rRNA) and 33 different proteins (encoded by 57 genes). The large 60S subunit contains 3 rRNA molecules (25S, 5.8S and 5S rRNA) and 46 different proteins (encoded by 81 genes). uL29 is associated with the polypeptide exit tunnel.

It is found in the cytoplasm. Its function is as follows. Component of the ribosome, a large ribonucleoprotein complex responsible for the synthesis of proteins in the cell. The small ribosomal subunit (SSU) binds messenger RNAs (mRNAs) and translates the encoded message by selecting cognate aminoacyl-transfer RNA (tRNA) molecules. The large subunit (LSU) contains the ribosomal catalytic site termed the peptidyl transferase center (PTC), which catalyzes the formation of peptide bonds, thereby polymerizing the amino acids delivered by tRNAs into a polypeptide chain. The nascent polypeptides leave the ribosome through a tunnel in the LSU and interact with protein factors that function in enzymatic processing, targeting, and the membrane insertion of nascent chains at the exit of the ribosomal tunnel. The chain is Large ribosomal subunit protein uL29A from Saccharomyces cerevisiae (strain ATCC 204508 / S288c) (Baker's yeast).